The following is a 173-amino-acid chain: Large ribosomal subunit protein uL10 (173 aa).

The protein belongs to the universal ribosomal protein uL10 family. Part of the ribosomal stalk of the 50S ribosomal subunit. The N-terminus interacts with L11 and the large rRNA to form the base of the stalk. The C-terminus forms an elongated spine to which L12 dimers bind in a sequential fashion forming a multimeric L10(L12)X complex.

Forms part of the ribosomal stalk, playing a central role in the interaction of the ribosome with GTP-bound translation factors. The chain is Large ribosomal subunit protein uL10 from Chloroherpeton thalassium (strain ATCC 35110 / GB-78).